We begin with the raw amino-acid sequence, 159 residues long: Neuroglobin-2 (159 aa).

Residues 3–151 (KLTEKDKELI…VVAAMSRGWA (149 aa)) form the Globin domain. 2 residues coordinate heme b: His66 and His98.

This sequence belongs to the globin family. As to quaternary structure, monomer. Homodimers and homotetramers. Mainly monomeric but also detected as part of homodimers and homotetramers.

Its subcellular location is the cytoplasm. It localises to the cytosol. It is found in the mitochondrion matrix. It carries out the reaction Fe(III)-heme b-[protein] + nitric oxide + H2O = Fe(II)-heme b-[protein] + nitrite + 2 H(+). Monomeric globin with a bis-histidyl six-coordinate heme-iron atom through which it can bind dioxygen, carbon monoxide and nitric oxide. Could help transport oxygen and increase its availability to the metabolically active neuronal tissues, though its low quantity in tissues as well as its high affinity for dioxygen, which may limit its oxygen-releasing ability, argue against it. The ferrous/deoxygenated form exhibits a nitrite reductase activity and it could produce nitric oxide which in turn inhibits cellular respiration in response to hypoxia. In its ferrous/deoxygenated state, it may also exhibit GDI (Guanine nucleotide Dissociation Inhibitor) activity toward heterotrimeric G-alpha proteins, thereby regulating signal transduction to facilitate neuroprotective responses in the wake of hypoxia and associated oxidative stress. In Oncorhynchus mykiss (Rainbow trout), this protein is Neuroglobin-2 (ngb2).